A 338-amino-acid polypeptide reads, in one-letter code: Glycerol-3-phosphate dehydrogenase [NAD(P)+] (338 aa).

NADPH contacts are provided by Ser13, Trp14, and Lys108. Residues Lys108, Gly139, and Ser141 each contribute to the sn-glycerol 3-phosphate site. Ala143 serves as a coordination point for NADPH. Sn-glycerol 3-phosphate contacts are provided by Lys194, Asp247, Ser257, Arg258, and Asn259. Residue Lys194 is the Proton acceptor of the active site. Position 258 (Arg258) interacts with NADPH. Residues Val282 and Glu284 each coordinate NADPH.

It belongs to the NAD-dependent glycerol-3-phosphate dehydrogenase family.

Its subcellular location is the cytoplasm. It catalyses the reaction sn-glycerol 3-phosphate + NAD(+) = dihydroxyacetone phosphate + NADH + H(+). The enzyme catalyses sn-glycerol 3-phosphate + NADP(+) = dihydroxyacetone phosphate + NADPH + H(+). It participates in membrane lipid metabolism; glycerophospholipid metabolism. In terms of biological role, catalyzes the reduction of the glycolytic intermediate dihydroxyacetone phosphate (DHAP) to sn-glycerol 3-phosphate (G3P), the key precursor for phospholipid synthesis. In Streptococcus gordonii (strain Challis / ATCC 35105 / BCRC 15272 / CH1 / DL1 / V288), this protein is Glycerol-3-phosphate dehydrogenase [NAD(P)+].